We begin with the raw amino-acid sequence, 367 residues long: Alanine racemase (367 aa).

Lys34 functions as the Proton acceptor; specific for D-alanine in the catalytic mechanism. Residue Lys34 is modified to N6-(pyridoxal phosphate)lysine. Arg129 provides a ligand contact to substrate. The active-site Proton acceptor; specific for L-alanine is Tyr251. Residue Met299 participates in substrate binding.

It belongs to the alanine racemase family. It depends on pyridoxal 5'-phosphate as a cofactor.

It catalyses the reaction L-alanine = D-alanine. It participates in amino-acid biosynthesis; D-alanine biosynthesis; D-alanine from L-alanine: step 1/1. In terms of biological role, catalyzes the interconversion of L-alanine and D-alanine. May also act on other amino acids. The polypeptide is Alanine racemase (alr) (Thiobacillus denitrificans (strain ATCC 25259 / T1)).